We begin with the raw amino-acid sequence, 402 residues long: Argininosuccinate synthase (402 aa).

8–16 is a binding site for ATP; it reads AYSGGLDTS. L-citrulline-binding residues include Y86 and S91. G116 serves as a coordination point for ATP. L-aspartate contacts are provided by T118, N122, and D123. N122 contributes to the L-citrulline binding site. Residues R126, S175, S184, E260, and Y272 each coordinate L-citrulline.

It belongs to the argininosuccinate synthase family. Type 1 subfamily. In terms of assembly, homotetramer.

The protein localises to the cytoplasm. The catalysed reaction is L-citrulline + L-aspartate + ATP = 2-(N(omega)-L-arginino)succinate + AMP + diphosphate + H(+). It functions in the pathway amino-acid biosynthesis; L-arginine biosynthesis; L-arginine from L-ornithine and carbamoyl phosphate: step 2/3. This chain is Argininosuccinate synthase, found in Clostridium novyi (strain NT).